The chain runs to 88 residues: Small ribosomal subunit protein uS15 (88 aa).

It belongs to the universal ribosomal protein uS15 family. Part of the 30S ribosomal subunit. Forms a bridge to the 50S subunit in the 70S ribosome, contacting the 23S rRNA.

One of the primary rRNA binding proteins, it binds directly to 16S rRNA where it helps nucleate assembly of the platform of the 30S subunit by binding and bridging several RNA helices of the 16S rRNA. Functionally, forms an intersubunit bridge (bridge B4) with the 23S rRNA of the 50S subunit in the ribosome. This chain is Small ribosomal subunit protein uS15, found in Mycoplasma mycoides subsp. mycoides SC (strain CCUG 32753 / NCTC 10114 / PG1).